We begin with the raw amino-acid sequence, 202 residues long: UPF0056 membrane protein CPn_1010/CP_0843/CPj1010/CpB1048 (202 aa).

The next 6 membrane-spanning stretches (helical) occupy residues 7-27 (LSLLFYVLFDSPGSIPVFVAL), 39-59 (VILRECLFALGALILFVTFGR), 61-81 (FFQFLDISLYAFQIIGGFLLF), 105-125 (PIFFPLAFPVITGPAVITALL), 137-157 (IIFTAMIIAWAFSLFTLLCSS), and 175-195 (FGIALLLMSVNLMLKGISIAF).

Belongs to the UPF0056 (MarC) family.

The protein resides in the cell membrane. The chain is UPF0056 membrane protein CPn_1010/CP_0843/CPj1010/CpB1048 from Chlamydia pneumoniae (Chlamydophila pneumoniae).